Reading from the N-terminus, the 139-residue chain is ATP synthase epsilon chain (139 aa).

Belongs to the ATPase epsilon chain family. As to quaternary structure, F-type ATPases have 2 components, CF(1) - the catalytic core - and CF(0) - the membrane proton channel. CF(1) has five subunits: alpha(3), beta(3), gamma(1), delta(1), epsilon(1). CF(0) has three main subunits: a, b and c.

It localises to the cell inner membrane. Its function is as follows. Produces ATP from ADP in the presence of a proton gradient across the membrane. This is ATP synthase epsilon chain from Erwinia tasmaniensis (strain DSM 17950 / CFBP 7177 / CIP 109463 / NCPPB 4357 / Et1/99).